The sequence spans 145 residues: Deoxyuridine 5'-triphosphate nucleotidohydrolase (145 aa).

Residues 63–65, Asn76, and 80–82 each bind substrate; these read RSG and TID.

Belongs to the dUTPase family. Requires Mg(2+) as cofactor.

It catalyses the reaction dUTP + H2O = dUMP + diphosphate + H(+). It functions in the pathway pyrimidine metabolism; dUMP biosynthesis; dUMP from dCTP (dUTP route): step 2/2. Its function is as follows. This enzyme is involved in nucleotide metabolism: it produces dUMP, the immediate precursor of thymidine nucleotides and it decreases the intracellular concentration of dUTP so that uracil cannot be incorporated into DNA. The protein is Deoxyuridine 5'-triphosphate nucleotidohydrolase of Chlamydia pneumoniae (Chlamydophila pneumoniae).